A 21-amino-acid chain; its full sequence is Alpha-fibrinogenase A1 (21 aa).

This sequence belongs to the peptidase S1 family. Snake venom subfamily. As to quaternary structure, monomer. As to expression, expressed by the venom gland.

The protein localises to the secreted. With respect to regulation, inhibited by PMSF, bovine aprotinin (APR), and soybean trypsin inhibitor (STI). Is not inhibited by EDTA, beta-mercaptoethanol, and high temperature (85 degrees Celsius). Snake venom serine protease that completely cleaves fibrinogen Aalpha chain (FGA), partially cleaves Bbeta chain (FGB) and has no activity on gamma chain. Is more potent that A2 and A3 alpha-fibrinogenases. Very active within 5 minutes. In Crotalus atrox (Western diamondback rattlesnake), this protein is Alpha-fibrinogenase A1.